The chain runs to 79 residues: ESX secretion system protein YukD (79 aa).

This sequence belongs to the EsaB family.

Its function is as follows. Required for YukE secretion. Probable component or regulator of the ESX/ESAT-6-like secretion system (BsEss). In Bacillus subtilis (strain 168), this protein is ESX secretion system protein YukD (yukD).